The chain runs to 263 residues: 4-hydroxy-tetrahydrodipicolinate reductase (263 aa).

Residues 7 to 12, 96 to 98, and 122 to 125 each bind NAD(+); these read GFKGRM, GTT, and APNF. H152 (proton donor/acceptor) is an active-site residue. H153 contacts (S)-2,3,4,5-tetrahydrodipicolinate. K156 serves as the catalytic Proton donor. 162–163 contacts (S)-2,3,4,5-tetrahydrodipicolinate; the sequence is GT.

Belongs to the DapB family.

It is found in the cytoplasm. The catalysed reaction is (S)-2,3,4,5-tetrahydrodipicolinate + NAD(+) + H2O = (2S,4S)-4-hydroxy-2,3,4,5-tetrahydrodipicolinate + NADH + H(+). The enzyme catalyses (S)-2,3,4,5-tetrahydrodipicolinate + NADP(+) + H2O = (2S,4S)-4-hydroxy-2,3,4,5-tetrahydrodipicolinate + NADPH + H(+). The protein operates within amino-acid biosynthesis; L-lysine biosynthesis via DAP pathway; (S)-tetrahydrodipicolinate from L-aspartate: step 4/4. Functionally, catalyzes the conversion of 4-hydroxy-tetrahydrodipicolinate (HTPA) to tetrahydrodipicolinate. This is 4-hydroxy-tetrahydrodipicolinate reductase from Listeria monocytogenes serovar 1/2a (strain ATCC BAA-679 / EGD-e).